A 185-amino-acid polypeptide reads, in one-letter code: Ribosome-recycling factor (185 aa).

Belongs to the RRF family.

Its subcellular location is the cytoplasm. Functionally, responsible for the release of ribosomes from messenger RNA at the termination of protein biosynthesis. May increase the efficiency of translation by recycling ribosomes from one round of translation to another. The sequence is that of Ribosome-recycling factor from Streptococcus pneumoniae serotype 2 (strain D39 / NCTC 7466).